Consider the following 499-residue polypeptide: ALBINO3-like protein 1, chloroplastic (499 aa).

The N-terminal 45 residues, 1–45, are a transit peptide targeting the chloroplast; sequence MSSTISLKPTHLILSSFSTGKVLQFRRSRFSHTPSSSSSRYRTLV. A run of 4 helical transmembrane segments spans residues 115 to 135, 184 to 204, 263 to 283, and 302 to 322; these read LSTVHVPYSYGFAIILLTVLV, LAGINPLAGCLPTLATIPVWI, LAYLVLPLLLVFSQYLSIQIM, and LLPLMIGYFALSVPSGLSLYW. Residues 378 to 499 are disordered; the sequence is LKIPREKGGE…QQHSHETEKR (122 aa). Composition is skewed to basic and acidic residues over residues 379–420, 430–452, and 486–499; these read KIPR…RQKA, DKAHEQDEKSDTAIVAEDDKKTE, and HDTEQQHSHETEKR. Residues 397–436 adopt a coiled-coil conformation; that stretch reads GERFRLLKEQEAKRRREKEERQKAEAALSNQNTDKAHEQD.

It belongs to the OXA1/ALB3/YidC (TC 2.A.9.2) family. As to quaternary structure, homodimer. Interacts with ALB3. Interacts with STIC2. As to expression, highly expressed in green tissues.

The protein localises to the plastid. It is found in the chloroplast thylakoid membrane. Its function is as follows. Required for the insertion of some light harvesting chlorophyll-binding proteins (LHCP) into the chloroplast thylakoid membrane. Plays a role in the accumulation of some cytochrome b6f components in the thylakoid membrane. Required for the assembly and/or stability of the F(1)F(0) ATP synthase in chloroplast thylakoid membranes. Functions to stabilize or promote assembly of F(1) during its attachment to the membrane-embedded F(0) part. Participates with STIC2 in thylakoid protein targeting. May function with a specific subset of thylakoidal proteins. In Arabidopsis thaliana (Mouse-ear cress), this protein is ALBINO3-like protein 1, chloroplastic.